A 155-amino-acid chain; its full sequence is Transcriptional repressor NrdR (155 aa).

A zinc finger spans residues 3-34; sequence CPFCGNVDTQVKDSRPAEDHVSIRRRRFCPAC. Residues 49 to 139 enclose the ATP-cone domain; the sequence is LVVIKTNGKR…VYKNFQAADD (91 aa).

Belongs to the NrdR family. Zn(2+) serves as cofactor.

Its function is as follows. Negatively regulates transcription of bacterial ribonucleotide reductase nrd genes and operons by binding to NrdR-boxes. The polypeptide is Transcriptional repressor NrdR (Ruegeria sp. (strain TM1040) (Silicibacter sp.)).